The chain runs to 783 residues: uncharacterized protein (783 aa).

A disordered region spans residues 1–22 (MVNTRGYTTLPNVEEPANNSQD). The Cytoplasmic segment spans residues 1–109 (MVNTRGYTTL…SKIGNVMVMR (109 aa)). The chain crosses the membrane as a helical; Signal-anchor for type II membrane protein span at residues 110–127 (RIFYIMMMSIIAALIIAS). The Extracellular portion of the chain corresponds to 128–783 (DRLPNGKARG…NLHGINTNEF (656 aa)). N-linked (GlcNAc...) asparagine glycosylation is found at Asn139 and Asn213. Residues 241 to 333 (HNGQLNNIPV…GTGDALTPEW (93 aa)) form the PA domain. An N-linked (GlcNAc...) asparagine glycan is attached at Asn529.

Its subcellular location is the cell membrane. This is an uncharacterized protein from Saccharomyces cerevisiae (strain ATCC 204508 / S288c) (Baker's yeast).